Reading from the N-terminus, the 350-residue chain is Protein FAM118B (350 aa).

Ala-2 carries the N-acetylalanine modification. Residue Ser-9 is modified to Phosphoserine. The interval 330 to 350 (AREGQLNGSSAAHGEIRGCST) is disordered.

It belongs to the FAM118 family.

It localises to the nucleus. The protein localises to the cajal body. Functionally, may play a role in Cajal bodies formation. In Rattus norvegicus (Rat), this protein is Protein FAM118B (Fam118b).